We begin with the raw amino-acid sequence, 159 residues long: Large ribosomal subunit protein uL15 (159 aa).

Over residues 1-11 (MKLNELRDNEG) the composition is skewed to basic and acidic residues. Residues 1 to 40 (MKLNELRDNEGARYQSKRLGRGIGSGKGKTSGKGVKGQTS) form a disordered region. Gly residues predominate over residues 21 to 35 (RGIGSGKGKTSGKGV).

The protein belongs to the universal ribosomal protein uL15 family. As to quaternary structure, part of the 50S ribosomal subunit.

Its function is as follows. Binds to the 23S rRNA. This chain is Large ribosomal subunit protein uL15, found in Paramagnetospirillum magneticum (strain ATCC 700264 / AMB-1) (Magnetospirillum magneticum).